A 346-amino-acid polypeptide reads, in one-letter code: Growth hormone-inducible transmembrane protein (346 aa).

The transit peptide at 1–45 (MLAARLVCLRTLPSRVFQPTFITKASPLVKNSITKNQWLLTPSRE) directs the protein to the mitochondrion. The Mitochondrial matrix segment spans residues 46-83 (YATKTRIRTHRGKTGQELKEAALEPSLEKVFKIDQMGK). A helical membrane pass occupies residues 84-104 (WFVAGGAAVGLGALCYYGLGM). The Mitochondrial intermembrane portion of the chain corresponds to 105-126 (SNEIGAIEKAVIWPQYVKDRIH). A helical membrane pass occupies residues 127–147 (STYMYLAGSIGLTALSALALA). Topologically, residues 148–160 (RSPALMNFMMTGS) are mitochondrial matrix. A helical membrane pass occupies residues 161 to 181 (WMTIGATFAAMIGAGMLVQSI). At 182–191 (SYEQSPGPKH) the chain is on the mitochondrial intermembrane side. Residues 192–212 (LAWMLHSGVMGAVVAPLTILG) traverse the membrane as a helical segment. At 213 to 214 (GP) the chain is on the mitochondrial matrix side. Residues 215–235 (LLLRAAWYTAGIVGGLSTVAM) form a helical membrane-spanning segment. At 236–245 (CAPSEKFLNM) the chain is on the mitochondrial intermembrane side. A helical transmembrane segment spans residues 246-266 (GAPLGVGLGLVFASSLGSMFL). Residues 267–272 (PPTSVA) are Mitochondrial matrix-facing. A helical membrane pass occupies residues 273-293 (GATLYSVAMYGGLVLFSMFLL). Over 294–346 (YDTQKVVKRAEITPAYGAQKYDPINSMLTIYMDTLNIFMRVATMLATGSNRKK) the chain is Mitochondrial intermembrane.

This sequence belongs to the BI1 family. As to quaternary structure, interacts with LETM1 and AFG3L2. In terms of processing, undergoes AFG3L2-mediated proteolytic degradation, upon hyperpolarization of mitochondria.

The protein resides in the mitochondrion inner membrane. Its function is as follows. Plays an important role in maintenance of mitochondrial morphology and in mediating either calcium or potassium/proton antiport. Mediates proton-dependent calcium efflux from mitochondrion. Also functions as an electroneutral mitochondrial proton/potassium exchanger. Required for the mitochondrial tubular network and cristae organization. Involved in apoptotic release of cytochrome c. Inhibits AFG3L2 proteolytic activity, stimulating respiration and stabilizing respiratory enzymes in actively respiring mitochondria. However, when mitochondria become hyperpolarized, GHITM loses its inhibitory activity toward AFG3L2 and the now active AFG3L2 turns first on GHITM and, if hyperpolarization persists, on other proteins of the mitochondria, leading to a broad remodeling of the proteome. The chain is Growth hormone-inducible transmembrane protein (Ghitm) from Rattus norvegicus (Rat).